We begin with the raw amino-acid sequence, 718 residues long: Polyribonucleotide nucleotidyltransferase (718 aa).

The Mg(2+) site is built by aspartate 496 and aspartate 502. In terms of domain architecture, KH spans 563–622 (PRLLTIKIDSDMIGLVIGPGGKTIKGITEETGAKIDIEDDGTVTISAVDENKAKRARNII). The S1 motif domain occupies 632–700 (GDVYAGRITR…NKGRINLTRL (69 aa)).

Belongs to the polyribonucleotide nucleotidyltransferase family. Mg(2+) is required as a cofactor.

It localises to the cytoplasm. The enzyme catalyses RNA(n+1) + phosphate = RNA(n) + a ribonucleoside 5'-diphosphate. Involved in mRNA degradation. Catalyzes the phosphorolysis of single-stranded polyribonucleotides processively in the 3'- to 5'-direction. The sequence is that of Polyribonucleotide nucleotidyltransferase from Nostoc punctiforme (strain ATCC 29133 / PCC 73102).